The following is a 715-amino-acid chain: Polyribonucleotide nucleotidyltransferase (715 aa).

Mg(2+) contacts are provided by Asp500 and Asp506. Residues 567-634 (PKVKMIRINP…AYIESLVREA (68 aa)) enclose the KH domain. An S1 motif domain is found at 637-712 (GELYEAKVTR…ERGRVDLSRK (76 aa)).

Belongs to the polyribonucleotide nucleotidyltransferase family. Requires Mg(2+) as cofactor.

The protein resides in the cytoplasm. It carries out the reaction RNA(n+1) + phosphate = RNA(n) + a ribonucleoside 5'-diphosphate. Involved in mRNA degradation. Catalyzes the phosphorolysis of single-stranded polyribonucleotides processively in the 3'- to 5'-direction. This Acholeplasma laidlawii (strain PG-8A) protein is Polyribonucleotide nucleotidyltransferase.